A 646-amino-acid polypeptide reads, in one-letter code: Protein SENSITIVE TO UV 2 (646 aa).

The disordered stretch occupies residues 42-70 (PAPPPSTKISSSLSHPMQLQSSAGQQRKQ). The segment covering 48-70 (TKISSSLSHPMQLQSSAGQQRKQ) has biased composition (polar residues). Positions 119 to 126 (NRRCDSEK) match the Nuclear localization signal motif. Residues 123–157 (DSEKDLEIDRLKKELERVSKQLLDVEQECSQLKKG) are a coiled coil. The 271-residue stretch at 376-646 (KRTEQDVKQE…VFAFLGDNTI (271 aa)) folds into the Phosphatase tensin-type domain.

This sequence belongs to the serpin family. In terms of assembly, forms multimers through the coiled-coil domain. Post-translationally, probably phosphorylated by ATR. In terms of tissue distribution, accumulates throughout the root tip.

The protein localises to the nucleus. It localises to the cytoplasm. In terms of biological role, required for tolerance to DNA-damaging and cross-linking agents such as UVB irradiation, gamma-radiation, aphidicolin, ionizing radiation and hydroxyurea (HU), cisplatin (CDDP) and mitomycin C (MMC). Involved in cell-cycle G2/M arrest in response to DNA damage. Required for aluminum-dependent gene regulation and root growth inhibition in an ATR-dependent manner by halting cell cycle progression and triggering loss of the quiescent center (QC). The sequence is that of Protein SENSITIVE TO UV 2 from Arabidopsis thaliana (Mouse-ear cress).